The primary structure comprises 222 residues: Adenylate kinase (222 aa).

ATP is bound at residue 16–21; that stretch reads GAGKGT. Residues 36-65 form an NMP region; that stretch reads ATGDMLRSQISKGTELGLQAKKIMDQGGLV. AMP-binding positions include T37, R42, 63–65, 92–95, and Q99; these read GLV and GFPR. The segment at 133-170 is LID; sequence GRLIHPASGRSYHKLFNPPKEDMKDDVTGEPLVQRSDD. ATP is bound by residues R134 and 143–144; that span reads SY. Residues R167 and R178 each contribute to the AMP site. Q206 provides a ligand contact to ATP.

Belongs to the adenylate kinase family. AK2 subfamily. In terms of assembly, monomer.

The protein localises to the cytoplasm. It is found in the cytosol. Its subcellular location is the mitochondrion intermembrane space. The enzyme catalyses AMP + ATP = 2 ADP. In terms of biological role, catalyzes the reversible transfer of the terminal phosphate group between ATP and AMP. Plays an important role in cellular energy homeostasis and in adenine nucleotide metabolism. Adenylate kinase activity is critical for regulation of the phosphate utilization and the AMP de novo biosynthesis pathways. This is Adenylate kinase from Candida glabrata (strain ATCC 2001 / BCRC 20586 / JCM 3761 / NBRC 0622 / NRRL Y-65 / CBS 138) (Yeast).